A 247-amino-acid polypeptide reads, in one-letter code: Mannose-specific lectin CML-2 (247 aa).

D87 and G107 together coordinate a carbohydrate. N-linked (GlcNAc...) asparagine glycosylation occurs at N119. Mn(2+) is bound by residues E129 and D131. Ca(2+) is bound by residues D131 and F133. S138 and N139 together coordinate a carbohydrate. Positions 139 and 142 each coordinate Ca(2+). The Mn(2+) site is built by D142 and H147. A carbohydrate is bound by residues G221, E222, and Q223.

The protein belongs to the leguminous lectin family. As to quaternary structure, homodimer; non-covalently linked. Glycosylated.

In terms of biological role, mannose-specific lectin. Also binds alpha-methyl-D-mannoside, D-glucose, N-acetyl-D-glucosamine and sucrose but not D-galactose, D-arabinose, D-fructose, D-xylose, lactose or glycoproteins fetiun, PSM and ovalbumin. Shows agglutinating activity towards rabbit erythrocytes. In Centrolobium microchaete (Canarywood tree), this protein is Mannose-specific lectin CML-2.